The chain runs to 376 residues: Growth/differentiation factor 8 (376 aa).

The first 24 residues, Met1–Leu24, serve as a signal peptide directing secretion. The propeptide occupies Asn25 to Arg267. Asn72 carries an N-linked (GlcNAc...) asparagine glycan. Disulfide bonds link Cys273-Cys283, Cys282-Cys341, Cys310-Cys373, and Cys314-Cys375.

It belongs to the TGF-beta family. In terms of assembly, homodimer; disulfide-linked. Interacts with WFIKKN2, leading to inhibit its activity. Interacts with FSTL3. Post-translationally, synthesized as large precursor molecule that undergoes proteolytic cleavage to generate an N-terminal propeptide and a disulfide linked C-terminal dimer, which is the biologically active molecule. The circulating form consists of a latent complex of the C-terminal dimer and other proteins, including its propeptide, which maintain the C-terminal dimer in a latent, inactive state. Ligand activation requires additional cleavage of the prodomain by a tolloid-like metalloproteinase.

Its subcellular location is the secreted. Functionally, acts specifically as a negative regulator of skeletal muscle growth. This chain is Growth/differentiation factor 8 (Mstn), found in Rattus norvegicus (Rat).